The sequence spans 139 residues: Small ribosomal subunit protein uS19 (139 aa).

Belongs to the universal ribosomal protein uS19 family.

Protein S19 forms a complex with S13 that binds strongly to the 16S ribosomal RNA. The sequence is that of Small ribosomal subunit protein uS19 from Methanoregula boonei (strain DSM 21154 / JCM 14090 / 6A8).